Here is a 346-residue protein sequence, read N- to C-terminus: L-glyceraldehyde 3-phosphate reductase (346 aa).

NADP(+) is bound by residues W33, D61, Y66, S168, Q193, T223, L225, Q227, K233, S303, Q307, and N311.

Belongs to the shaker potassium channel beta subunit family. In terms of assembly, homotetramer. Homooctamer.

It carries out the reaction a primary alcohol + NADP(+) = an aldehyde + NADPH + H(+). The enzyme catalyses hydroxyacetone + NADP(+) = methylglyoxal + NADPH + H(+). Functionally, aldo-keto reductase that catalyzes the stereospecific, NADPH-dependent reduction of L-glyceraldehyde 3-phosphate (L-GAP) to L-glycerol 3-phosphate (L-G3P). The physiological role of Gpr is the detoxification of L-GAP, which may be formed via non-enzymatic and/or enzymatic racemization of D-GAP. Also contributes to cellular methylglyoxal detoxification by catalyzing the NADPH-dependent conversion of methylglyoxal to acetol. However, the catalytic efficiency of methylglyoxal reductase activity is more than 2 orders of magnitude lower than the L-GAP reductase activity. In addition, exhibits activity with glyoxal and probably plays a significant role in detoxification of glyoxal in vivo. Shows broad specificity and can use aromatic aldehydes such as 4-nitrobenzaldehyde and benzaldehyde, D,L-glyceraldehyde, phenylglyoxal, isatin and the model substrate 4-nitrobenzaldehyde. This is L-glyceraldehyde 3-phosphate reductase from Escherichia coli (strain K12).